The primary structure comprises 983 residues: Eukaryotic translation initiation factor 4E transporter (983 aa).

Residues 1 to 22 (MEKSVAETENGDAFLELKKLPT) form a disordered region. Residue Ser-4 is modified to Phosphoserine. Positions 29–35 (YTKEELL) match the YXXXXLphi motif motif. The tract at residues 40 to 99 (RPYSKQRPSCLSEKYDSDGVWDPEKWHASLYPASGRSSPVESLKKESESDRPSLVRRIAD) is disordered. Basic and acidic residues predominate over residues 52-66 (EKYDSDGVWDPEKWH). A phosphoserine mark is found at Ser-73 and Ser-77. A compositionally biased stretch (basic and acidic residues) spans 81 to 99 (SLKKESESDRPSLVRRIAD). Phosphoserine occurs at positions 114, 119, 135, and 137. An interaction with CSDE1 region spans residues 130-160 (VSSRRSGSPLEKDSDGLRLLGGRRIGSGRII). Positions 194–210 (RREFGDSKRVFGERRRN) match the Nuclear localization signal motif. The disordered stretch occupies residues 206–229 (ERRRNDSYTEEEPEWFSAGPTSQS). Positions 218-239 (PEWFSAGPTSQSETIELTGFDD) are interaction with DDX6. 4 positions are modified to phosphoserine: Ser-300, Ser-344, Ser-352, and Ser-373. The disordered stretch occupies residues 341 to 360 (SNPSRSGSRSSSLGSTPHEE). Residues 344-355 (SRSGSRSSSLGS) show a composition bias toward low complexity. A Glycyl lysine isopeptide (Lys-Gly) (interchain with G-Cter in SUMO2) cross-link involves residue Lys-409. Ser-416 bears the Phosphoserine mark. Positions 437 to 446 (VEAGLKGLKV) match the Nuclear export signal motif. The tract at residues 447–489 (DQQMKNSTPFMAEHLEETLSAASSNRQLKKDGDMTAFNKLVNT) is interaction with LSM14A. At Lys-485 the chain carries N6-acetyllysine. Phosphoserine is present on residues Ser-563 and Ser-586. Disordered regions lie at residues 585–616 (PSPI…SAQM), 642–693 (FYQP…MLSP), 708–800 (REKT…VPGT), and 906–951 (LHPP…SSPV). The short motif at 612–637 (VSAQMSQLELQQAALEGLALPHDLAV) is the Nuclear export signal element. Basic and acidic residues predominate over residues 651 to 660 (QVDRTRDGLR). Ser-692 is subject to Phosphoserine. Positions 694–712 (SFTPTSVIRKMYESREKTK) are interaction with PATL1. Residues 724–734 (DGKEDTQKTSE) show a composition bias toward basic and acidic residues. 2 stretches are compositionally biased toward polar residues: residues 735–774 (ENLL…QTSR) and 910–928 (GSSS…NVPS). A phosphoserine mark is found at Ser-751, Ser-919, and Ser-949. Positions 938–983 (QLEHRTSQRSSSPVGLAKWFGSDVLQQPLPSMPTKVISVDELEYRQ) are interaction with LSM14A.

The protein belongs to the 4E-T/EIF4E-T family. As to quaternary structure, interacts (via YXXXXLphi motif) with EIF4E. Interacts (via YXXXXLphi motif) with EIF4E2. Interacts with DDX6. Interacts with CSDE1/UNR. Interacts with CNOT1; promoting association with the CCR4-NOT complex. Interacts with LSM14A; promoting EIF4ENIF1 localization to P-bodies. Interacts with PATL1. Interacts with importin beta only in the presence of importin alpha, suggesting a direct interaction with importin alpha. Interacts with APOBEC3G in an RNA-dependent manner. In terms of processing, phosphorylation by MAPK8/JNK1 and or MAPK9/JNK2 in response to oxidative stress promotes P-body assembly. Phosphorylated during meiotic maturation. In terms of tissue distribution, highly expressed in developing oocytes.

Its subcellular location is the cytoplasm. The protein localises to the nucleus. It localises to the PML body. The protein resides in the nucleus speckle. Its function is as follows. EIF4E-binding protein that regulates translation and stability of mRNAs in processing bodies (P-bodies). Plays a key role in P-bodies to coordinate the storage of translationally inactive mRNAs in the cytoplasm and prevent their degradation. Acts as a binding platform for multiple RNA-binding proteins: promotes deadenylation of mRNAs via its interaction with the CCR4-NOT complex, and blocks decapping via interaction with eIF4E (EIF4E and EIF4E2), thereby protecting deadenylated and repressed mRNAs from degradation. Component of a multiprotein complex that sequesters and represses translation of proneurogenic factors during neurogenesis. Promotes miRNA-mediated translational repression. Involved in mRNA translational repression mediated by the miRNA effector TNRC6B by protecting TNRC6B-targeted mRNAs from decapping and subsequent decay. Required for the formation of P-bodies. Also acts as a nucleoplasmic shuttling protein, which mediates the nuclear import of EIF4E and DDX6 by a piggy-back mechanism. In Mus musculus (Mouse), this protein is Eukaryotic translation initiation factor 4E transporter.